We begin with the raw amino-acid sequence, 10061 residues long: MATH and LRR domain-containing protein PFE0570w (10061 aa).

Disordered regions lie at residues 166–210 (DMDN…EKKN), 244–471 (NNSD…NDIN), and 1004–1170 (DDQK…DTSF). Residues 169–179 (NNPNNHVSNNG) show a composition bias toward polar residues. Low complexity predominate over residues 193–205 (TSNSIHKNNNTNI). Basic and acidic residues predominate over residues 270-282 (KKSDNNNDKKNDD). The span at 285 to 320 (NNNNNNNNNNNNNNNNNDNHVCTSNNQPNTINKQNN) shows a compositional bias: low complexity. The segment covering 328 to 338 (DQNGRTKITPQ) has biased composition (polar residues). A coiled-coil region spans residues 338-366 (QNVNQKEKEIKNVVKEKNNFNREEKDITN). A compositionally biased stretch (basic and acidic residues) spans 342–365 (QKEKEIKNVVKEKNNFNREEKDIT). Over residues 366-375 (NSDDYDENST) the composition is skewed to acidic residues. 2 stretches are compositionally biased toward polar residues: residues 376–389 (DESCSYNPNITSSE) and 421–437 (VPSNDNASSLNVKSAEN). A coiled-coil region spans residues 431–469 (NVKSAENCNKEKKKKKKKKKKELNNDNKDNTLNNETMND). Residues 441-451 (EKKKKKKKKKK) show a composition bias toward basic residues. Residues 460 to 471 (NTLNNETMNDIN) are compositionally biased toward low complexity. The segment covering 1025–1037 (NEEKPNVNKEGNI) has biased composition (basic and acidic residues). Over residues 1047 to 1057 (NKNKNNNNNNN) the composition is skewed to low complexity. Over residues 1058–1132 (DKNDKNDKND…KKKKNGKEQN (75 aa)) the composition is skewed to basic and acidic residues. Residues 1133–1165 (EDSTESDDESSVIDDNYIDDDSCDCDSESDSID) are compositionally biased toward acidic residues. Residues 1328-1458 (NGKIELYIPN…SGGLLIKGKV (131 aa)) enclose the MATH domain. The interval 1651 to 1698 (GGNLQNEQKGDEDVKKEDVKKENVNKEEIKNGNNNNNNDENENEVDDN) is disordered. The segment covering 1658-1680 (QKGDEDVKKEDVKKENVNKEEIK) has biased composition (basic and acidic residues). Residues 1916–1948 (NYLSNLNKVKININDLNNNIVDVNNSIHNIEKE) are a coiled coil. The segment covering 1973–1995 (HKETSSIQNKGKEKSNNNIKSDD) has biased composition (basic and acidic residues). 4 disordered regions span residues 1973–1998 (HKETSSIQNKGKEKSNNNIKSDDNNN), 2155–2245 (LNKS…PSYK), 2427–2566 (YSDD…NNIK), and 3120–3139 (SNETNDTNHTNRTNRTNEMK). Acidic residues predominate over residues 2216 to 2228 (NNDDKDDDDDDSY). The segment covering 2235-2245 (SDGKKNDPSYK) has biased composition (basic and acidic residues). Residues 2475–2484 (NNNNNNNNMM) show a composition bias toward low complexity. 2 stretches are compositionally biased toward basic and acidic residues: residues 2487-2496 (DDNKVNKNEE) and 2505-2527 (QIKEGKEKKLRDFIQKEDIRNED). Low complexity-rich tracts occupy residues 2552 to 2564 (NNNNNNNNNNNNN) and 3121 to 3133 (NETNDTNHTNRTN). Positions 2555–2580 (NNNNNNNNNNIKRLDDSYNKLLKNKN) form a coiled coil. Residues 3398–3418 (KLILKKIFMYLNIICMIIKYI) form a helical membrane-spanning segment. Disordered stretches follow at residues 3802 to 3826 (STNDEENVDRSDDSESNDDKKYSKK), 3847 to 3890 (LTSG…DNNN), and 3919 to 3953 (ESNDKSYKNQNIQSNEQSVTPNRNIEENKDHEKKS). The span at 3809 to 3822 (VDRSDDSESNDDKK) shows a compositional bias: basic and acidic residues. Low complexity predominate over residues 3851–3890 (NSSSKNSKKNSNNESIQMDNTNNSNSNNNNKNDNNNDNNN). Residues 3926–3941 (KNQNIQSNEQSVTPNR) show a composition bias toward polar residues. Basic and acidic residues predominate over residues 3942 to 3953 (NIEENKDHEKKS). The stretch at 3977-4001 (EHLGNATAVLNILQKKLENEELKKL) forms a coiled coil. Positions 4039-4065 (VSAHKEKNVKTDSSDDKKKKEDNENNN) are enriched in basic and acidic residues. Disordered regions lie at residues 4039–4074 (VSAHKEKNVKTDSSDDKKKKEDNENNNKNKNNIIHN), 4155–4180 (KGNNSKDNNNNNNNNNNNNNNKNNMG), 4352–4414 (SNNN…NNNN), 4919–4943 (NKRKQQIDSSNNNNNVVVNNDDNDN), 4991–5030 (DGLNADSSNLGPYNMNNVKNKNNNNNNSNNKRKKNEKNEK), and 5179–5207 (SKIASTNGNNNNNNNNNNNNNNNNSKSNL). The span at 4157–4178 (NNSKDNNNNNNNNNNNNNNKNN) shows a compositional bias: low complexity. A coiled-coil region spans residues 4399 to 4424 (NNNNNNNNNNNNNNNNVNKEIIKLNS). 3 stretches are compositionally biased toward low complexity: residues 4929-4943 (NNNNNVVVNNDDNDN), 5004-5019 (NMNNVKNKNNNNNNSN), and 5185-5202 (NGNNNNNNNNNNNNNNNN). Positions 5006–5046 (NNVKNKNNNNNNSNNKRKKNEKNEKIDKIEQFLHESELEKD) form a coiled coil. Coiled-coil stretches lie at residues 5486–5563 (NNNN…NIYE), 5728–5810 (DVLK…DKEE), and 5900–6022 (MNND…INNY). 3 stretches are compositionally biased toward basic and acidic residues: residues 5716–5732 (KDAKKDSKKIPVDVLKD), 5738–5811 (SNKE…KEEP), and 5909–5953 (NKNK…KKDN). Disordered stretches follow at residues 5716-5816 (KDAK…QINE), 5892-6009 (EIIN…KKLK), 6123-6142 (KSETEASNKNVESNDNVDGK), 6299-6338 (NDSINMPLPDSPTTTSNSNNNNNNNNSNNNNNNNNYDKGE), 6722-6760 (NMNNNNNNNNNNNNNNNNNNNNNNNNNNNNNNNNNNNNI), 7585-7730 (EDML…VEEK), and 7744-7787 (DLLS…KKSS). A compositionally biased stretch (low complexity) spans 5954–5968 (NNSNNNNNNNNLSNN). Positions 5969–5978 (GEEDPNDSDS) are enriched in acidic residues. Positions 5991-6003 (NKNINDDSDDNNK) are enriched in basic and acidic residues. Polar residues predominate over residues 6129-6138 (SNKNVESNDN). Composition is skewed to low complexity over residues 6314–6333 (SNSNNNNNNNNSNNNNNNNN) and 6722–6759 (NMNNNNNNNNNNNNNNNNNNNNNNNNNNNNNNNNNNNN). The stretch at 6719 to 6743 (NMNNMNNNNNNNNNNNNNNNNNNNN) forms a coiled coil. A compositionally biased stretch (basic and acidic residues) spans 7585 to 7599 (EDMLHSKKTDVIQHG). Positions 7600–7685 (DEEEDDEEDD…EHINEEEQED (86 aa)) are enriched in acidic residues. Coiled-coil stretches lie at residues 7601 to 7637 (EEEDDEEDDEEDDEEDEEEEEEDEDEEDVEDVEDIED), 7710 to 7813 (NTKI…NKNE), 7934 to 7961 (KTDEQKIKEEIKQTQDEEDTYLDLIDNE), and 8217 to 8241 (NINNKEKETNKNEEQQQGEAEGKRE). Over residues 7749–7765 (SKKKNHKDKRNASKNKN) the composition is skewed to basic residues. The segment covering 7766 to 7786 (KNKDILKKNENNINDEKEKKS) has biased composition (basic and acidic residues). Disordered regions lie at residues 8189–8252 (ETGG…GGEE), 8293–8380 (GKVS…IIMS), and 8474–8497 (KKKNYSNNNIYNNNSSNKVSMDEE). Positions 8218-8242 (INNKEKETNKNEEQQQGEAEGKREG) are enriched in basic and acidic residues. Over residues 8243–8252 (EGEEGEGGEE) the composition is skewed to acidic residues. Residues 8305 to 8314 (LLNDKEHEKD) are compositionally biased toward basic and acidic residues. Over residues 8315-8363 (NEDNDEDNDEDDDDEDDDEDDEDDDDDDDDDDDDDDDDDYDEDYDEDYD) the composition is skewed to acidic residues. The segment covering 8364–8374 (EKLVENKKNER) has biased composition (basic and acidic residues). Residues 8478 to 8492 (YSNNNIYNNNSSNKV) show a composition bias toward low complexity. Coiled coils occupy residues 8644–8697 (SETL…ELNN), 8882–8907 (QYLEKENTYNNLYKKIKDEKRIVDNY), and 9219–9247 (IDMKKKIEQEEDKKKIINNNNNNINSNNN). Disordered regions lie at residues 9759–9779 (TIPRHNTTTTNNNNNDNNNNS), 9891–9926 (SNTSGNMKNSSNIRSSSNIRSSNNIKSSSNIKSSSN), and 9985–10061 (KNNS…NNIY). Composition is skewed to low complexity over residues 9764-9779 (NTTTTNNNNNDNNNNS), 9899-9926 (NSSNIRSSSNIRSSNNIKSSSNIKSSSN), and 9986-10022 (NNSITNETHNNNDNMKTNHNNNNNNNNNNNNNNNNNT). The segment covering 10031–10041 (IFQQNQNHSDT) has biased composition (polar residues). Positions 10042–10061 (NNNNNNNNKNNSNNNNNNIY) are enriched in low complexity.

It is found in the membrane. This is MATH and LRR domain-containing protein PFE0570w from Plasmodium falciparum (isolate 3D7).